We begin with the raw amino-acid sequence, 90 residues long: Auxin-induced protein 6B (90 aa).

It belongs to the ARG7 family.

In Glycine max (Soybean), this protein is Auxin-induced protein 6B.